Consider the following 482-residue polypeptide: Putative metabolite transport protein YfiG (482 aa).

Over 1–29 the chain is Cytoplasmic; that stretch reads MSTKKKEAVIGKESLAHKGLLRTITLVST. A helical transmembrane segment spans residues 30-50; the sequence is FGGLLFGYDTGVINGALPFMA. Residues 51–59 lie on the Extracellular side of the membrane; it reads TAGQLNLTP. A helical membrane pass occupies residues 60 to 80; it reads VTEGLVASSLLLGAAFGAMFG. The Cytoplasmic segment spans residues 81 to 92; it reads GRLSDRHGRRKT. Residues 93-113 form a helical membrane-spanning segment; that stretch reads ILYLALLFIAATLGCTFSPNA. At 114–120 the chain is on the extracellular side; it reads SVMIAFR. The chain crosses the membrane as a helical span at residues 121–141; it reads FLLGLAVGCASVTVPTFLAEI. The Cytoplasmic segment spans residues 142–155; it reads SPAERRGRIVTQNE. A helical transmembrane segment spans residues 156–176; that stretch reads LMIVIGQLLAYTFNAIIGSTM. Residues 177–184 lie on the Extracellular side of the membrane; it reads GESANVWR. A helical transmembrane segment spans residues 185 to 205; it reads YMLVIATLPAVVLWFGMLIVP. Over 206–263 the chain is Cytoplasmic; the sequence is ESPRWLAAKGRMGDALRVLRQIREDSQAQQEIKEIKHAIEGTAKKAGFHDFQEPWIRR. A helical membrane pass occupies residues 264–284; the sequence is ILFIGIGIAIVQQITGVNSIM. Topologically, residues 285–301 are extracellular; sequence YYGTEILREAGFQTEAA. A helical membrane pass occupies residues 302–322; sequence LIGNIANGVISVIAVIFGIWL. Residues 323-331 lie on the Cytoplasmic side of the membrane; sequence LGKVRRRPM. 2 consecutive transmembrane segments (helical) span residues 332 to 352 and 353 to 373; these read LIIG…LSIV and LEGT…FLAF. The Cytoplasmic segment spans residues 374–400; sequence QQTAISTVTWLMLSEIFPMHVRGLGMG. Residues 401-421 traverse the membrane as a helical segment; it reads ISTFCLWTANFLIGFTFPILL. Topologically, residues 422 to 423 are extracellular; the sequence is NH. Residues 424–444 traverse the membrane as a helical segment; that stretch reads IGMSATFFIFVAMNILAILFV. Over 445–482 the chain is Cytoplasmic; sequence KKYVPETKGRSLEQLEHSFRQYGRRADQEIQNQTTHLS.

This sequence belongs to the major facilitator superfamily. Sugar transporter (TC 2.A.1.1) family.

It localises to the cell membrane. The polypeptide is Putative metabolite transport protein YfiG (yfiG) (Bacillus subtilis (strain 168)).